A 187-amino-acid chain; its full sequence is Ubiquinone biosynthesis protein COQ4 homolog, mitochondrial (187 aa).

Zn(2+)-binding residues include H77, D78, H81, and E93.

This sequence belongs to the COQ4 family. As to quaternary structure, component of a multi-subunit COQ enzyme complex. It depends on Zn(2+) as a cofactor.

It localises to the mitochondrion inner membrane. It carries out the reaction a 4-hydroxy-3-methoxy-5-(all-trans-polyprenyl)benzoate + H(+) = a 2-methoxy-6-(all-trans-polyprenyl)phenol + CO2. Its pathway is cofactor biosynthesis; ubiquinone biosynthesis. Its function is as follows. Lyase that catalyzes the C1-decarboxylation of 4-hydroxy-3-methoxy-5-(all-trans-polyprenyl)benzoic acid into 2-methoxy-6-(all-trans-polyprenyl)phenol during ubiquinone biosynthesis. The chain is Ubiquinone biosynthesis protein COQ4 homolog, mitochondrial from Leishmania major.